Here is a 179-residue protein sequence, read N- to C-terminus: Replication restart protein DnaT (179 aa).

Residues 1 to 83 (MSSRILTSHF…FEEPAAAPVA (83 aa)) form a required for trimerization and to bind PriB region. The segment at 84 to 179 (VPMGKFAMYA…DSHIPRGFRG (96 aa)) is binds ssDNA. Residues 151 to 179 (SRASNGGQPKRDVNSVSEPDSHIPRGFRG) form a disordered region. Positions 159–173 (PKRDVNSVSEPDSHI) are enriched in basic and acidic residues.

The protein belongs to the DnaT family. As to quaternary structure, homotrimer. Interacts with PriB. Interacts with PriC. Component of the replication restart primosome. Primosome assembly occurs via a 'hand-off' mechanism. PriA binds to replication forks, subsequently PriB then DnaT bind; DnaT then displaces ssDNA to generate the helicase loading substrate.

Involved in the restart of stalled replication forks, which reloads the replicative helicase on sites other than the origin of replication. Can function in multiple replication restart pathways. Displaces ssDNA from a PriB-ssDNA complex. Probably forms a spiral filament on ssDNA. In terms of biological role, binds single-stranded (ss)DNA. The minimal binding site is about 26 +/- 2 nucleotides (nt) per trimer. Two DNA-protein complexes are seen with 55 nt-long ssDNA. This Klebsiella pneumoniae subsp. pneumoniae (strain ATCC 700721 / MGH 78578) protein is Replication restart protein DnaT.